The following is a 125-amino-acid chain: MKGCSLDLHLSPMASTLQSCHQDSTVNDRSSTIRSKEINAFYSGRLSEYDLVEIQMRAIIEMASKDREVTALELVPVRLESPLGCSVKRSVKRFLEKRKKRSKSFTLTPNYTSSTSSSSSSLHNF.

The EAR motif lies at 6 to 10 (LDLHL). Positions 99 to 125 (KKRSKSFTLTPNYTSSTSSSSSSLHNF) are disordered. A compositionally biased stretch (low complexity) spans 112–125 (TSSTSSSSSSLHNF).

In terms of assembly, monomer. Lack of homodimerization, and very weak or no interaction with AFPH2/NINJA and other JAZ proteins. Interacts (via EAR motif) with TPL. Interacts (via jas motif) with MYC2. In terms of processing, phosphorylated at multiple serine residues.

In terms of biological role, non-TIFY functional repressor of jasmonate (JA)-mediated growth and defense responses. Intrinsically resistant to JA-induced turnover, probably due to the absence of the canonical degron that strongly interacts with COI1 in the presence of JA-Ile in the TIFY/JAZ proteins. This is Protein JAZ13 from Arabidopsis thaliana (Mouse-ear cress).